A 345-amino-acid polypeptide reads, in one-letter code: Phosphate acyltransferase (345 aa).

The protein belongs to the PlsX family. Homodimer. Probably interacts with PlsY.

Its subcellular location is the cytoplasm. The catalysed reaction is a fatty acyl-[ACP] + phosphate = an acyl phosphate + holo-[ACP]. The protein operates within lipid metabolism; phospholipid metabolism. Catalyzes the reversible formation of acyl-phosphate (acyl-PO(4)) from acyl-[acyl-carrier-protein] (acyl-ACP). This enzyme utilizes acyl-ACP as fatty acyl donor, but not acyl-CoA. This is Phosphate acyltransferase from Anaplasma phagocytophilum (strain HZ).